The following is a 385-amino-acid chain: GDP-D-glucose phosphorylase 1 (385 aa).

Residue histidine 218 is the Tele-GMP-histidine intermediate of the active site.

The protein belongs to the GDPGP1 family.

It is found in the cytoplasm. The enzyme catalyses GDP-alpha-D-glucose + phosphate = alpha-D-glucose 1-phosphate + GDP + H(+). Specific and highly efficient GDP-D-glucose phosphorylase regulating the levels of GDP-D-glucose in cells. This is GDP-D-glucose phosphorylase 1 (GDPGP1) from Bos taurus (Bovine).